Reading from the N-terminus, the 397-residue chain is 2-deoxy-scyllo-inosose synthase (397 aa).

NAD(+) is bound by residues aspartate 41, 71–74, 103–107, 127–128, 138–140, and 149–150; these read EPYK, GVIGN, TS, SLK, and KN. Lysine 140 is a catalytic residue. Glutamate 182 lines the Co(2+) pocket. The active site involves glutamate 242. Co(2+) is bound by residues histidine 245 and histidine 261.

The protein belongs to the sugar phosphate cyclases superfamily. DOI synthase family. The cofactor is NAD(+). Requires Co(2+) as cofactor.

The catalysed reaction is D-glucose 6-phosphate = 2-deoxy-L-scyllo-inosose + phosphate. Its pathway is metabolic intermediate biosynthesis; 2-deoxystreptamine biosynthesis; 2-deoxystreptamine from D-glucose 6-phosphate: step 1/4. It functions in the pathway antibiotic biosynthesis; gentamicin biosynthesis. Its function is as follows. Catalyzes the intramolecular carbocycle formation from D-glucose-6-phosphate to 2-deoxy-scyllo-inosose (DOI). In Micromonospora echinospora (Micromonospora purpurea), this protein is 2-deoxy-scyllo-inosose synthase (gtmA).